Here is a 484-residue protein sequence, read N- to C-terminus: EF-hand calcium-binding domain-containing protein 14 (484 aa).

Disordered regions lie at residues 1 to 48 (MKKR…TDEE), 227 to 255 (GSMENNGSNQILPSPSPPSELDNKSHSES), and 313 to 395 (EQRT…FTSD). Acidic residues predominate over residues 37 to 48 (PDSDSESSTDEE). Polar residues-rich tracts occupy residues 228–239 (SMENNGSNQILP), 315–324 (RTNVSSSTME), and 335–347 (LVTNRSDTVQAQS). 2 consecutive EF-hand domains span residues 423–452 (SSIKDLQDLFHKTGQDVDGMLTYQELWNSL) and 453–484 (GSAMPRPESLRAFDSNGDGRYSFLELRLALGI). Residues Asp466, Asn468, Asp470, Arg472, and Glu477 each coordinate Ca(2+).

The sequence is that of EF-hand calcium-binding domain-containing protein 14 (Efcab14) from Mus musculus (Mouse).